A 342-amino-acid polypeptide reads, in one-letter code: Heat-inducible transcription repressor HrcA (342 aa).

The protein belongs to the HrcA family.

Functionally, negative regulator of class I heat shock genes (grpE-dnaK-dnaJ and groELS operons). Prevents heat-shock induction of these operons. This Methylibium petroleiphilum (strain ATCC BAA-1232 / LMG 22953 / PM1) protein is Heat-inducible transcription repressor HrcA.